Consider the following 90-residue polypeptide: Acylphosphatase (90 aa).

In terms of domain architecture, Acylphosphatase-like spans 3–90; sequence QRQFTVYGCV…RVFSDFTIER (88 aa). Catalysis depends on residues Arg18 and Asn36.

The protein belongs to the acylphosphatase family.

It catalyses the reaction an acyl phosphate + H2O = a carboxylate + phosphate + H(+). The polypeptide is Acylphosphatase (acyP) (Actinobacillus succinogenes (strain ATCC 55618 / DSM 22257 / CCUG 43843 / 130Z)).